We begin with the raw amino-acid sequence, 381 residues long: Heterogeneous nuclear rnp K-like protein 2 (381 aa).

The segment at 1–34 (MSQFFEAATPVAIPTNNTNGGSSDAGSAATGGAP) is disordered. Residues 15-33 (TNNTNGGSSDAGSAATGGA) show a composition bias toward low complexity. KH domains are found at residues 43–107 (TINH…IGDI), 156–221 (IGYV…LIEI), and 258–326 (NTRI…ESML). Residues 357 to 381 (RSDSASFLEEKEEPQKNHDNKEEQS) form a disordered region. Phosphoserine is present on residues Ser358, Ser360, and Ser362. Basic and acidic residues predominate over residues 369 to 381 (EPQKNHDNKEEQS).

It belongs to the HEK2 family. In terms of assembly, binds RNA. Post-translationally, phosphorylated by the plasma membrane-Anchored casein kinase YCK1. Phosphorylation at its C-terminus reduces its RNA-binding capacity.

The protein resides in the cytoplasm. Its subcellular location is the P-body. It is found in the nucleus. The protein localises to the chromosome. It localises to the telomere. RNA-binding protein involved in the correct localization of transcripts in the cell. RNA localization is a widespread mechanism for achieving localized protein synthesis. Required for the asymmetric localization to the daughter cell nucleus of the ASH1 transcript, coding for a specific repressor of transcription. Overexpression inhibits translation of the ASH1 transcript. Involved in the stability of transcripts, like the MTL1 mRNA. Involved in structural and functional organization of telomeric chromatin and regulates silencing at the HMR locus. This is Heterogeneous nuclear rnp K-like protein 2 (HEK2) from Saccharomyces cerevisiae (strain RM11-1a) (Baker's yeast).